The following is a 440-amino-acid chain: Transposon Ty1-LR4 Gag polyprotein (440 aa).

Composition is skewed to polar residues over residues 1–10 (MESQQLSQHP), 48–60 (TKAN…TPAS), and 127–152 (QSQF…GNTF). Disordered regions lie at residues 1 to 93 (MESQ…MMTQ), 126 to 173 (PQSQ…RPPP), and 352 to 440 (GSRN…PGTY). Residues 153-165 (TDSSSADSDMTST) are compositionally biased toward low complexity. Residues 299-401 (NNGIHINNKV…NSKSKTARAH (103 aa)) are RNA-binding. Residues 402 to 418 (NVSTSNNSPSTDNDSIS) are compositionally biased toward low complexity. Ser-416 carries the post-translational modification Phosphoserine. Residues 419–428 (KSTTEPIQLN) show a composition bias toward polar residues. The span at 429–440 (NKHDLHLRPGTY) shows a compositional bias: basic and acidic residues.

Homotrimer.

It localises to the cytoplasm. Functionally, capsid protein (CA) is the structural component of the virus-like particle (VLP), forming the shell that encapsulates the retrotransposons dimeric RNA genome. The particles are assembled from trimer-clustered units and there are holes in the capsid shells that allow for the diffusion of macromolecules. CA also has nucleocapsid-like chaperone activity, promoting primer tRNA(i)-Met annealing to the multipartite primer-binding site (PBS), dimerization of Ty1 RNA and initiation of reverse transcription. The polypeptide is Transposon Ty1-LR4 Gag polyprotein (TY1A-LR4) (Saccharomyces cerevisiae (strain ATCC 204508 / S288c) (Baker's yeast)).